We begin with the raw amino-acid sequence, 429 residues long: Zygotic gap protein knirps (429 aa).

The segment at residues 2-78 (NQTCKVCGEP…VGMSKGGSRY (77 aa)) is a DNA-binding region (nuclear receptor). NR C4-type zinc fingers lie at residues 5–25 (CKVCGEPAAGFHFGAFTCEGC) and 42–66 (CKNEGKCIIDKKNRTTCKACRLRKC). Positions 112-126 (SVGGAPSASSPVGSP) are enriched in low complexity. 4 disordered regions span residues 112–148 (SVGGAPSASSPVGSPHTPGFGDMAAHLHHHHQQQQQQ), 223–250 (QSVDSVESQNRFSPASQPPVVQPTSSAR), 338–357 (TSRSSVHSFNDSGSEDQEVE), and 375–397 (SSSSSSHSAAHSPNTTTAHAEVK). 2 stretches are compositionally biased toward polar residues: residues 225 to 237 (VDSVESQNRFSPA) and 338 to 349 (TSRSSVHSFNDS). Over residues 375–393 (SSSSSSHSAAHSPNTTTAH) the composition is skewed to low complexity.

The protein belongs to the nuclear hormone receptor family. NR0 subfamily.

It localises to the nucleus. Its function is as follows. Transcriptional repressor. Binds to multiple sites in the eve stripe 3 enhancer element. Plays an essential role in the segmentation process both by refining the expression patterns of gap genes and by establishing pair-rules stripes of gene expression. This chain is Zygotic gap protein knirps (kni), found in Drosophila melanogaster (Fruit fly).